The chain runs to 290 residues: Alpha-mannosidase (290 aa).

The active-site Nucleophile is Asp17. Asn64 carries N-linked (GlcNAc...) asparagine glycosylation.

The protein belongs to the glycosyl hydrolase 38 family. In terms of assembly, dimer. It depends on Zn(2+) as a cofactor.

The catalysed reaction is Hydrolysis of terminal, non-reducing alpha-D-mannose residues in alpha-D-mannosides.. Its activity is regulated as follows. Inhibited by swainsonine but not by 1-desoxymannojirimycin. Its function is as follows. Liberates mannose from p-nitrophenyl-alpha-D-mannoside. The protein is Alpha-mannosidase of Lablab purpureus (Hyacinth bean).